The primary structure comprises 273 residues: Proteasome subunit beta type-5-B (273 aa).

A propeptide spans 1–57 (MKLDTSGLETTMPVIGFGSNSEMLDGFSSAPSFDLPRTTDFDGFQKKAVEMVKPAKG) (removed in mature form). T58 serves as the catalytic Nucleophile.

It belongs to the peptidase T1B family. Component of the 20S core complex of the 26S proteasome. The 26S proteasome is composed of a core protease (CP), known as the 20S proteasome, capped at one or both ends by the 19S regulatory particle (RP/PA700). The 20S proteasome core is composed of 28 subunits that are arranged in four stacked rings, resulting in a barrel-shaped structure. The two end rings are each formed by seven alpha subunits, and the two central rings are each formed by seven beta subunits. The catalytic chamber with the active sites is on the inside of the barrel.

The protein localises to the cytoplasm. It is found in the nucleus. It carries out the reaction Cleavage of peptide bonds with very broad specificity.. Its function is as follows. The proteasome is a multicatalytic proteinase complex which is characterized by its ability to cleave peptides with Arg, Phe, Tyr, Leu, and Glu adjacent to the leaving group at neutral or slightly basic pH. The proteasome has an ATP-dependent proteolytic activity. The sequence is that of Proteasome subunit beta type-5-B (PBE2) from Arabidopsis thaliana (Mouse-ear cress).